A 145-amino-acid chain; its full sequence is D-aminoacyl-tRNA deacylase (145 aa).

The short motif at 137-138 (GP) is the Gly-cisPro motif, important for rejection of L-amino acids element.

The protein belongs to the DTD family. In terms of assembly, homodimer.

The protein resides in the cytoplasm. The enzyme catalyses glycyl-tRNA(Ala) + H2O = tRNA(Ala) + glycine + H(+). It catalyses the reaction a D-aminoacyl-tRNA + H2O = a tRNA + a D-alpha-amino acid + H(+). In terms of biological role, an aminoacyl-tRNA editing enzyme that deacylates mischarged D-aminoacyl-tRNAs. Also deacylates mischarged glycyl-tRNA(Ala), protecting cells against glycine mischarging by AlaRS. Acts via tRNA-based rather than protein-based catalysis; rejects L-amino acids rather than detecting D-amino acids in the active site. By recycling D-aminoacyl-tRNA to D-amino acids and free tRNA molecules, this enzyme counteracts the toxicity associated with the formation of D-aminoacyl-tRNA entities in vivo and helps enforce protein L-homochirality. This is D-aminoacyl-tRNA deacylase from Salmonella typhimurium (strain LT2 / SGSC1412 / ATCC 700720).